The sequence spans 225 residues: Protein-disulfide oxidoreductase DsbI (225 aa).

A helical transmembrane segment spans residues 27–47; sequence FLWLLMAIAMGGLIILAHSFF. Residues Cys-56 and Cys-59 are joined by a disulfide bond. The next 2 helical transmembrane spans lie at 65 to 85 and 87 to 107; these read AMFV…NIVL and LIGC…SIKL. An intrachain disulfide couples Cys-128 to Cys-154. The chain crosses the membrane as a helical span at residues 199–219; the sequence is CMLAFGLCLILLLVMSGAWAL.

Belongs to the DsbB family. DsbI subfamily. In terms of assembly, interacts with DsbL.

It localises to the cell inner membrane. Its function is as follows. Required for disulfide bond formation in some proteins. Part of a redox system composed of DsbI and DsbL that mediates formation of an essential disulfide bond in AssT. This is Protein-disulfide oxidoreductase DsbI from Salmonella choleraesuis (strain SC-B67).